The primary structure comprises 263 residues: Ribosomal RNA small subunit methyltransferase J (263 aa).

S-adenosyl-L-methionine contacts are provided by residues 108-109, 124-125, and D178; these read RD and ER.

It belongs to the methyltransferase superfamily. RsmJ family.

It localises to the cytoplasm. The catalysed reaction is guanosine(1516) in 16S rRNA + S-adenosyl-L-methionine = N(2)-methylguanosine(1516) in 16S rRNA + S-adenosyl-L-homocysteine + H(+). Functionally, specifically methylates the guanosine in position 1516 of 16S rRNA. This Idiomarina loihiensis (strain ATCC BAA-735 / DSM 15497 / L2-TR) protein is Ribosomal RNA small subunit methyltransferase J.